Reading from the N-terminus, the 96-residue chain is MEQAPEDQGPQREPYNEWTLDLLEELKNEAVRHFPRPWLHSLGQHIYNTYGDTWEGVEAIIRILQQLLFIHFRIGCRHSRIGITRQRRVRNGTSRS.

Positions Met1 to Leu42 are homooligomerization. Phosphoserine; by host is present on residues Ser79, Ser94, and Ser96.

Belongs to the HIV-1 VPR protein family. Homooligomer, may form homodimer. Interacts with p6-gag region of the Pr55 Gag precursor protein through a (Leu-X-X)4 motif near the C-terminus of the P6gag protein. Interacts with host UNG. May interact with host RAD23A/HHR23A. Interacts with host VPRBP/DCAF1, leading to hijack the CUL4A-RBX1-DDB1-DCAF1/VPRBP complex, mediating ubiquitination of host proteins such as TERT and ZGPAT and arrest of the cell cycle in G2 phase. Phosphorylated on several residues by host. These phosphorylations regulate VPR activity for the nuclear import of the HIV-1 pre-integration complex.

It is found in the virion. It localises to the host nucleus. The protein localises to the host extracellular space. In terms of biological role, during virus replication, may deplete host UNG protein, and incude G2-M cell cycle arrest. Acts by targeting specific host proteins for degradation by the 26S proteasome, through association with the cellular CUL4A-DDB1 E3 ligase complex by direct interaction with host VPRPB/DCAF-1. Cell cycle arrest reportedly occurs within hours of infection and is not blocked by antiviral agents, suggesting that it is initiated by the VPR carried into the virion. Additionally, VPR induces apoptosis in a cell cycle dependent manner suggesting that these two effects are mechanistically linked. Detected in the serum and cerebrospinal fluid of AIDS patient, VPR may also induce cell death to bystander cells. Functionally, during virus entry, plays a role in the transport of the viral pre-integration (PIC) complex to the host nucleus. This function is crucial for viral infection of non-dividing macrophages. May act directly at the nuclear pore complex, by binding nucleoporins phenylalanine-glycine (FG)-repeat regions. The sequence is that of Protein Vpr from Human immunodeficiency virus type 1 group M subtype F1 (isolate 93BR020) (HIV-1).